Reading from the N-terminus, the 537-residue chain is MSKKVVILGSGPNRIGQGIEFDYACVHAVFSLQEEGYYAVMVNCNPETVSTDYDTADKLYFEPIVFEHVMDIIEREKPEGVILQFGGQTPLKLALPLQKNGVKILGTKPESIDKAEDRELFRELIIELGLKQPPSGTARTKEEALKIAKEIGFPVLVRPSYVLGGRAMRIVYDEEELKEYLEEAVSVSHERPVLIDKFLDNSIELDVDAVSDGKDVLIGAVMEHIEEAGVHSGDSATSIPPYSLSKEIVEEVKEQTRKLAVALEVKGLINVQYAVQNNEVYVLEVNPRASRTVPFVSKSIGYPLAKIATKVAIGKSLREILPEVFERLEKGEAHFASDFLPKEKKIFSVKEVVFPWKRFPEVDPILGPEMKSTGEVMGIDKEFGLAYYKAQLSAGYRLPEKGNLFISVADRDKPKILELAKEFEKLGFGIYATSGTYKFLKEHGVNAKRVLKVSEGRPNVVDMIINGEIHLVINTPSGKREKSDAYYIRRACVQFNVPYYTTMRAGYAVLEAIKSIKKLKEEGKGLSVHSLQEIYNI.

The tract at residues 1–395 (MSKKVVILGS…AYYKAQLSAG (395 aa)) is carbamoyl phosphate synthetic domain. Residues 122–313 (RELIIELGLK…LAKIATKVAI (192 aa)) form the ATP-grasp domain. ATP-binding residues include Arg-158, Lys-197, Leu-199, Glu-204, Gly-229, Val-230, His-231, Ser-232, Gln-272, and Glu-284. Mg(2+)-binding residues include Gln-272, Glu-284, and Asn-286. 3 residues coordinate Mn(2+): Gln-272, Glu-284, and Asn-286. Residues 396 to 537 (YRLPEKGNLF…VHSLQEIYNI (142 aa)) enclose the MGS-like domain. Residues 396 to 537 (YRLPEKGNLF…VHSLQEIYNI (142 aa)) form an allosteric domain region.

It belongs to the CarB family. As to quaternary structure, composed of two chains; the small (or glutamine) chain promotes the hydrolysis of glutamine to ammonia, which is used by the large (or ammonia) chain to synthesize carbamoyl phosphate. Tetramer of heterodimers (alpha,beta)4. Requires Mg(2+) as cofactor. The cofactor is Mn(2+).

The catalysed reaction is hydrogencarbonate + L-glutamine + 2 ATP + H2O = carbamoyl phosphate + L-glutamate + 2 ADP + phosphate + 2 H(+). It carries out the reaction hydrogencarbonate + NH4(+) + 2 ATP = carbamoyl phosphate + 2 ADP + phosphate + 2 H(+). Its pathway is amino-acid biosynthesis; L-arginine biosynthesis; carbamoyl phosphate from bicarbonate: step 1/1. It participates in pyrimidine metabolism; UMP biosynthesis via de novo pathway; (S)-dihydroorotate from bicarbonate: step 1/3. Its function is as follows. Large subunit of the glutamine-dependent carbamoyl phosphate synthetase (CPSase). CPSase catalyzes the formation of carbamoyl phosphate from the ammonia moiety of glutamine, carbonate, and phosphate donated by ATP, constituting the first step of 2 biosynthetic pathways, one leading to arginine and/or urea and the other to pyrimidine nucleotides. The large subunit (synthetase) binds the substrates ammonia (free or transferred from glutamine from the small subunit), hydrogencarbonate and ATP and carries out an ATP-coupled ligase reaction, activating hydrogencarbonate by forming carboxy phosphate which reacts with ammonia to form carbamoyl phosphate. This is Carbamoyl phosphate synthase large chain, C-terminal section (carB2) from Aquifex aeolicus (strain VF5).